A 1101-amino-acid chain; its full sequence is Coiled-coil domain-containing protein 150 (1101 aa).

Coiled-coil stretches lie at residues 106 to 299 (RLES…DLTS), 398 to 680 (AAHA…KEDN), 712 to 940 (DSEI…NYEQ), and 970 to 1033 (VRNK…EAHR). The segment covering 1055-1071 (SGEDRWQEKDQDVKHDV) has biased composition (basic and acidic residues). The interval 1055–1101 (SGEDRWQEKDQDVKHDVMSNQSVLHRWERKQNLRPMPKKYHSEVQRK) is disordered.

This chain is Coiled-coil domain-containing protein 150 (CCDC150), found in Homo sapiens (Human).